The following is a 632-amino-acid chain: Tail spike protein (632 aa).

Residues 505–630 (SDARCKTEPL…KRMQEALAAL (126 aa)) enclose the Peptidase S74 domain.

In terms of assembly, homotrimer. Proteolytic cleavage and release of the chaperone in the host cytosol stabilizes the folded protein. The cleavage gives rise to the mature tail spike protein but is not essential for catalytic activity.

It is found in the virion. Functions as a receptor binding protein (RBP) and probably mediates the attachment to the host capsular exopolysaccharides. Displays a depolymerase activity that specifically degrades the K5-type polysaccharides of Escherichia coli capsule. Its function is as follows. The C-terminal chaperone protein mediates homotrimerization and proper folding of the catalytic trimer. This chain is Tail spike protein (kflA), found in Escherichia virus K5 (Bacteriophage K5).